Reading from the N-terminus, the 150-residue chain is Nucleoside diphosphate kinase (150 aa).

ATP is bound by residues K10, F58, R86, T92, R103, and N113. H116 functions as the Pros-phosphohistidine intermediate in the catalytic mechanism.

The protein belongs to the NDK family. In terms of assembly, homohexamer. Mg(2+) serves as cofactor.

It catalyses the reaction a 2'-deoxyribonucleoside 5'-diphosphate + ATP = a 2'-deoxyribonucleoside 5'-triphosphate + ADP. The enzyme catalyses a ribonucleoside 5'-diphosphate + ATP = a ribonucleoside 5'-triphosphate + ADP. Major role in the synthesis of nucleoside triphosphates other than ATP. The ATP gamma phosphate is transferred to the NDP beta phosphate via a ping-pong mechanism, using a phosphorylated active-site intermediate. This chain is Nucleoside diphosphate kinase (awd), found in Drosophila yakuba (Fruit fly).